The sequence spans 456 residues: Probable multidrug resistance protein NorM (456 aa).

12 consecutive transmembrane segments (helical) span residues 13–34 (QFLTIFTPIVITQLTLFSMTFF), 54–76 (SSFWAPVNAAFSGLLMAITPIIA), 95–117 (LYIALFLAFILILINFLVVPMIL), 132–154 (HFLNGICIGIPAFFISAILRSFI), 161–183 (RVTMLITLCTVPFNIFLNYCFIF), 193–215 (GAGSGYATGITYWLVVLVSVILI), 244–266 (IGVPNGLTILFETSIFSAVTILM), 286–308 (LLYAFPLSVASTLTILGGYETGA), 321–343 (GMAAAILIGCVNGAILFFFRDII), 358–380 (MHFLVYAILFQFADAVLSPVLGA), 387–409 (VTVTSIVAFISYWLIGLPVGYGL), and 414–436 (LGPFGYWIGLSTGLFVAAFILSI).

It belongs to the multi antimicrobial extrusion (MATE) (TC 2.A.66.1) family.

The protein resides in the cell membrane. Its function is as follows. Multidrug efflux pump. The chain is Probable multidrug resistance protein NorM (norM) from Listeria monocytogenes serovar 1/2a (strain ATCC BAA-679 / EGD-e).